The primary structure comprises 69 residues: Small ribosomal subunit protein uS7 (69 aa).

This sequence belongs to the universal ribosomal protein uS7 family. As to quaternary structure, part of the 30S ribosomal subunit.

Its function is as follows. One of the primary rRNA binding proteins, it binds directly to 16S rRNA where it nucleates assembly of the head domain of the 30S subunit. Is located at the subunit interface close to the decoding center. This is Small ribosomal subunit protein uS7 (rps7) from Methanococcoides methylutens.